The sequence spans 551 residues: UvrABC system protein C (551 aa).

The region spanning 12-87 (EKPGVYIFKN…IFKHKPKYNI (76 aa)) is the GIY-YIG domain. The UVR domain occupies 193–228 (EFVKDYIEQKMNYHSKMLDFENAAKYRDLLLSFEKL).

The protein belongs to the UvrC family. As to quaternary structure, interacts with UvrB in an incision complex.

Its subcellular location is the cytoplasm. In terms of biological role, the UvrABC repair system catalyzes the recognition and processing of DNA lesions. UvrC both incises the 5' and 3' sides of the lesion. The N-terminal half is responsible for the 3' incision and the C-terminal half is responsible for the 5' incision. The polypeptide is UvrABC system protein C (Thermosipho africanus (strain TCF52B)).